A 227-amino-acid chain; its full sequence is Cytochrome c oxidase subunit 2 (227 aa).

At 1 to 26 (MNTWMNFNLQNSNSPLMEQLMFFHNH) the chain is on the mitochondrial intermembrane side. The chain crosses the membrane as a helical span at residues 27-48 (SMLIILLITILVGYIMSSLLYN). The Mitochondrial matrix portion of the chain corresponds to 49–62 (KLYNRYLLESQNVE). Residues 63–82 (IIWTILPAFMLIFIALPSLR) traverse the membrane as a helical segment. At 83–227 (LLYLLDDSNS…SFIKWISSNS (145 aa)) the chain is on the mitochondrial intermembrane side. His161, Cys196, Glu198, Cys200, His204, and Met207 together coordinate Cu cation. Residue Glu198 participates in Mg(2+) binding.

This sequence belongs to the cytochrome c oxidase subunit 2 family. Component of the cytochrome c oxidase (complex IV, CIV), a multisubunit enzyme composed of a catalytic core of 3 subunits and several supernumerary subunits. The complex exists as a monomer or a dimer and forms supercomplexes (SCs) in the inner mitochondrial membrane with ubiquinol-cytochrome c oxidoreductase (cytochrome b-c1 complex, complex III, CIII). It depends on Cu cation as a cofactor.

Its subcellular location is the mitochondrion inner membrane. It carries out the reaction 4 Fe(II)-[cytochrome c] + O2 + 8 H(+)(in) = 4 Fe(III)-[cytochrome c] + 2 H2O + 4 H(+)(out). In terms of biological role, component of the cytochrome c oxidase, the last enzyme in the mitochondrial electron transport chain which drives oxidative phosphorylation. The respiratory chain contains 3 multisubunit complexes succinate dehydrogenase (complex II, CII), ubiquinol-cytochrome c oxidoreductase (cytochrome b-c1 complex, complex III, CIII) and cytochrome c oxidase (complex IV, CIV), that cooperate to transfer electrons derived from NADH and succinate to molecular oxygen, creating an electrochemical gradient over the inner membrane that drives transmembrane transport and the ATP synthase. Cytochrome c oxidase is the component of the respiratory chain that catalyzes the reduction of oxygen to water. Electrons originating from reduced cytochrome c in the intermembrane space (IMS) are transferred via the dinuclear copper A center (CU(A)) of subunit 2 and heme A of subunit 1 to the active site in subunit 1, a binuclear center (BNC) formed by heme A3 and copper B (CU(B)). The BNC reduces molecular oxygen to 2 water molecules using 4 electrons from cytochrome c in the IMS and 4 protons from the mitochondrial matrix. The protein is Cytochrome c oxidase subunit 2 (COII) of Ctenocephalides felis (Cat flea).